Here is a 437-residue protein sequence, read N- to C-terminus: Protein translocase subunit SecY (437 aa).

10 consecutive transmembrane segments (helical) span residues 23-43 (IVFLIVAIIVFRIGSFIPIPG), 77-97 (IFALGIMPYISASIIIQLLTL), 125-145 (LILALVQSIGIAMTLPNIAGI), 154-174 (FYFYLIAIISLVTSTMFLMWL), 183-203 (IGNGISIIIFIGIIAGLPSAI), 217-237 (ILLFLFILLLIFSVIFLVVFM), 271-291 (MAGVIPAIFASSIVLFPATII), 315-335 (YLILYISAIVFFCFFYTGLVF), 367-387 (IMLRLTLVGSLYITFICLIPE), and 395-415 (VPFYFGGTSLLIVVVVIIDFI).

This sequence belongs to the SecY/SEC61-alpha family. In terms of assembly, component of the Sec protein translocase complex. Heterotrimer consisting of SecY, SecE and SecG subunits. The heterotrimers can form oligomers, although 1 heterotrimer is thought to be able to translocate proteins. Interacts with the ribosome. Interacts with SecDF, and other proteins may be involved. Interacts with SecA.

The protein resides in the cell membrane. Functionally, the central subunit of the protein translocation channel SecYEG. Consists of two halves formed by TMs 1-5 and 6-10. These two domains form a lateral gate at the front which open onto the bilayer between TMs 2 and 7, and are clamped together by SecE at the back. The channel is closed by both a pore ring composed of hydrophobic SecY resides and a short helix (helix 2A) on the extracellular side of the membrane which forms a plug. The plug probably moves laterally to allow the channel to open. The ring and the pore may move independently. The chain is Protein translocase subunit SecY from Buchnera aphidicola subsp. Acyrthosiphon pisum (strain APS) (Acyrthosiphon pisum symbiotic bacterium).